Reading from the N-terminus, the 582-residue chain is Sodium-dependent low-affinity dicarboxylate transporter 1 (582 aa).

The next 12 helical transmembrane spans lie at 17 to 37 (SFVI…VGDS), 59 to 79 (ALPL…FGIM), 87 to 107 (AYLP…LAVE), 130 to 150 (VMAG…NTAT), 224 to 244 (LMLS…TGTA), 271 to 291 (IFAF…LYLL), 317 to 337 (FSFA…LWIL), 353 to 373 (EFVS…TLPE), 401 to 421 (FPWS…GVKE), 455 to 475 (TNVC…AELA), 482 to 502 (PLNF…LPVA), and 527 to 547 (VTLG…GFVF).

Belongs to the SLC13A/DASS transporter (TC 2.A.47) family. NADC subfamily. Nad-1 and nad-2 are coexpressed in the intestinal tract from early larvae to adults, expression is from the pharynx through to the anus. Expression level is significantly greater in the anterior half of the intestine than in the posterior half.

The protein localises to the membrane. Its function is as follows. Low affinity sodium-dicarboxylate cotransporter that accepts a range of tricarboxylic acid-cycle intermediates with 4-5 carbon atoms. There is no interaction with monocarboxylates. This is Sodium-dependent low-affinity dicarboxylate transporter 1 (nac-1) from Caenorhabditis elegans.